Here is a 495-residue protein sequence, read N- to C-terminus: Germacrene A acid 8-beta-hydroxylase (495 aa).

A helical; Signal-anchor for type II membrane protein transmembrane segment spans residues 3–23 (PFTTFSLVASSLILLICWALV). N103 carries N-linked (GlcNAc...) asparagine glycosylation. C433 serves as a coordination point for heme.

This sequence belongs to the cytochrome P450 family. The cofactor is heme. As to expression, mostly expressed in leaves and flowers, and, to a lower extent, in roots and stems.

The protein localises to the membrane. The catalysed reaction is germacra-1(10),4,11(13)-trien-12-oate + reduced [NADPH--hemoprotein reductase] + O2 = 8beta-hydroxygermacra-1(10),4,11(13)-trien-12-oate + oxidized [NADPH--hemoprotein reductase] + H2O + H(+). The enzyme catalyses germacra-1(10),4,11(13)-trien-12-oate + reduced [NADPH--hemoprotein reductase] + O2 = 8-epi-inunolide + oxidized [NADPH--hemoprotein reductase] + 2 H2O. It catalyses the reaction germacra-1(10),4,11(13)-trien-12-oate + reduced [NADPH--hemoprotein reductase] + O2 = 8alpha-hydroxygermacra-1(10),4,11(13)-trien-12-oate + oxidized [NADPH--hemoprotein reductase] + H2O + H(+). Its pathway is secondary metabolite biosynthesis; terpenoid biosynthesis. Involved in the biosynthesis of germacrene-derived sesquiterpene lactones. Hydroxylates germacrene A acid to 8-beta-hydroxy-germacrene A and 8-alpha-hydroxy-germacrene A acids. Unlike 8-alpha-hydroxy-germacrene A acid with is spontaneously converted into inunolide (12, 8-alpha), 8-beta-hydroxy-germacrene A cannot undergo spontaneous lactonization. The protein is Germacrene A acid 8-beta-hydroxylase of Inula hupehensis (Inula helianthus-aquatilis subsp. hupehensis).